A 37-amino-acid chain; its full sequence is Cytochrome b6-f complex subunit 7 (37 aa).

A helical membrane pass occupies residues 5 to 25 (IFGTAFLFIVLVPVGLALGAF).

It belongs to the PetM family. In terms of assembly, the 4 large subunits of the cytochrome b6-f complex are cytochrome b6, subunit IV (17 kDa polypeptide, PetD), cytochrome f and the Rieske protein, while the 4 small subunits are PetG, PetL, PetM and PetN. The complex functions as a dimer.

The protein resides in the cellular thylakoid membrane. Component of the cytochrome b6-f complex, which mediates electron transfer between photosystem II (PSII) and photosystem I (PSI), cyclic electron flow around PSI, and state transitions. The chain is Cytochrome b6-f complex subunit 7 from Synechococcus elongatus (strain ATCC 33912 / PCC 7942 / FACHB-805) (Anacystis nidulans R2).